The chain runs to 134 residues: Global transcriptional regulator Spx (134 aa).

The cysteines at positions 10 and 13 are disulfide-linked.

Belongs to the ArsC family. Spx subfamily. Interacts with the C-terminal domain of the alpha subunit of the RNAP.

Its subcellular location is the cytoplasm. Functionally, global transcriptional regulator that plays a key role in stress response and exerts either positive or negative regulation of genes. Acts by interacting with the C-terminal domain of the alpha subunit of the RNA polymerase (RNAP). This interaction can enhance binding of RNAP to the promoter region of target genes and stimulate their transcription, or block interaction of RNAP with activator. The protein is Global transcriptional regulator Spx of Streptococcus pyogenes serotype M1.